Consider the following 71-residue polypeptide: Small ribosomal subunit protein bS21 (71 aa).

The protein belongs to the bacterial ribosomal protein bS21 family.

This Blochmanniella pennsylvanica (strain BPEN) protein is Small ribosomal subunit protein bS21.